The sequence spans 197 residues: Recombination protein RecR (197 aa).

The C4-type zinc finger occupies 55-70; it reads CVQCRDFTESEICTIC. The 96-residue stretch at 78 to 173 folds into the Toprim domain; the sequence is QQLCVVESPA…RPSRLAQGMP (96 aa).

The protein belongs to the RecR family.

In terms of biological role, may play a role in DNA repair. It seems to be involved in an RecBC-independent recombinational process of DNA repair. It may act with RecF and RecO. This Xanthomonas oryzae pv. oryzae (strain MAFF 311018) protein is Recombination protein RecR.